The chain runs to 805 residues: Phenylalanine--tRNA ligase beta subunit (805 aa).

A tRNA-binding domain is found at 39 to 148 (APPFTGVVVA…AALRPGTDIR (110 aa)). One can recognise a B5 domain in the interval 399 to 474 (PVREPVRMRL…RVYGFERIPD (76 aa)). Mg(2+) is bound by residues Asp-452, Asp-458, Glu-461, and Glu-462. Positions 703–804 (SRQPAVVRDL…LVAAHNARQR (102 aa)) constitute an FDX-ACB domain.

The protein belongs to the phenylalanyl-tRNA synthetase beta subunit family. Type 1 subfamily. Tetramer of two alpha and two beta subunits. Mg(2+) is required as a cofactor.

Its subcellular location is the cytoplasm. It catalyses the reaction tRNA(Phe) + L-phenylalanine + ATP = L-phenylalanyl-tRNA(Phe) + AMP + diphosphate + H(+). The chain is Phenylalanine--tRNA ligase beta subunit from Bordetella parapertussis (strain 12822 / ATCC BAA-587 / NCTC 13253).